Reading from the N-terminus, the 505-residue chain is Ribose import ATP-binding protein RbsA (505 aa).

ABC transporter domains lie at 12–249 and 259–504; these read LQMK…VGRK and VKKG…VAFS. ATP is bound at residue 44–51; sequence GENGAGKS.

It belongs to the ABC transporter superfamily. Ribose importer (TC 3.A.1.2.1) family. The complex is composed of an ATP-binding protein (RbsA), two transmembrane proteins (RbsC) and a solute-binding protein (RbsB).

It is found in the cell membrane. The enzyme catalyses D-ribose(out) + ATP + H2O = D-ribose(in) + ADP + phosphate + H(+). Functionally, part of the ABC transporter complex RbsABC involved in ribose import. Responsible for energy coupling to the transport system. The chain is Ribose import ATP-binding protein RbsA from Clostridium tetani (strain Massachusetts / E88).